A 255-amino-acid chain; its full sequence is MSIKVIIAGFKGKMGQAAYKMVTEDSELELVGLLDPFTDEKEVAGVPVFNAKEELAGLEAHVWVDFTTPKVAYDNTRFALEQGFCPVVGTTGFTPEQLEELITLSREKKLGGLIAPNFALGAVLLMQFAAQAAKYFANVEIIELHHDQKKDAPSGTAIKTAELISQVRPSKQQGAADEEESIVGARGADFDGMRIHSVRLPGLVAHQEVIFGSQGEGLTMRHDSYDRASFMTGVNLAIKEVVKRSELVYGLEHLL.

Residues Gly-9–Met-14, Gly-89–Thr-91, and Ala-115–Phe-118 contribute to the NAD(+) site. The Proton donor/acceptor role is filled by His-145. A (S)-2,3,4,5-tetrahydrodipicolinate-binding site is contributed by His-146. Lys-149 serves as the catalytic Proton donor. A (S)-2,3,4,5-tetrahydrodipicolinate-binding site is contributed by Gly-155 to Thr-156.

The protein belongs to the DapB family.

The protein resides in the cytoplasm. The catalysed reaction is (S)-2,3,4,5-tetrahydrodipicolinate + NAD(+) + H2O = (2S,4S)-4-hydroxy-2,3,4,5-tetrahydrodipicolinate + NADH + H(+). It catalyses the reaction (S)-2,3,4,5-tetrahydrodipicolinate + NADP(+) + H2O = (2S,4S)-4-hydroxy-2,3,4,5-tetrahydrodipicolinate + NADPH + H(+). It participates in amino-acid biosynthesis; L-lysine biosynthesis via DAP pathway; (S)-tetrahydrodipicolinate from L-aspartate: step 4/4. Its function is as follows. Catalyzes the conversion of 4-hydroxy-tetrahydrodipicolinate (HTPA) to tetrahydrodipicolinate. This is 4-hydroxy-tetrahydrodipicolinate reductase from Streptococcus sanguinis (strain SK36).